The following is a 103-amino-acid chain: MKNPLLRPWLTEKSTKLTEQKGQYVFQVKIDADKFDIKKAVEEKFGVDVVSIRTINCLGKSKRQYTRKGLIAGKKSDWKKAIVTLGDGQTIDYYAKPAEKSEK.

Belongs to the universal ribosomal protein uL23 family. In terms of assembly, part of the 50S ribosomal subunit. Contacts protein L29, and trigger factor when it is bound to the ribosome.

Functionally, one of the early assembly proteins it binds 23S rRNA. One of the proteins that surrounds the polypeptide exit tunnel on the outside of the ribosome. Forms the main docking site for trigger factor binding to the ribosome. This is Large ribosomal subunit protein uL23 from Chlorobaculum tepidum (strain ATCC 49652 / DSM 12025 / NBRC 103806 / TLS) (Chlorobium tepidum).